A 201-amino-acid chain; its full sequence is Potassium-transporting ATPase KdpC subunit (201 aa).

Residues 7–27 form a helical membrane-spanning segment; that stretch reads PAIVLLLVLTAITGLAYPLAM.

The protein belongs to the KdpC family. The system is composed of three essential subunits: KdpA, KdpB and KdpC.

The protein resides in the cell inner membrane. In terms of biological role, part of the high-affinity ATP-driven potassium transport (or Kdp) system, which catalyzes the hydrolysis of ATP coupled with the electrogenic transport of potassium into the cytoplasm. This subunit acts as a catalytic chaperone that increases the ATP-binding affinity of the ATP-hydrolyzing subunit KdpB by the formation of a transient KdpB/KdpC/ATP ternary complex. In Bradyrhizobium diazoefficiens (strain JCM 10833 / BCRC 13528 / IAM 13628 / NBRC 14792 / USDA 110), this protein is Potassium-transporting ATPase KdpC subunit.